Consider the following 140-residue polypeptide: Endoribonuclease YbeY (140 aa).

Zn(2+) contacts are provided by H105, H109, and D115.

The protein belongs to the endoribonuclease YbeY family. The cofactor is Zn(2+).

It is found in the cytoplasm. Its function is as follows. Single strand-specific metallo-endoribonuclease involved in late-stage 70S ribosome quality control and in maturation of the 3' terminus of the 16S rRNA. This Flavobacterium psychrophilum (strain ATCC 49511 / DSM 21280 / CIP 103535 / JIP02/86) protein is Endoribonuclease YbeY.